We begin with the raw amino-acid sequence, 63 residues long: Conotoxin Cl14.11 (63 aa).

The N-terminal stretch at 1 to 21 is a signal peptide; that stretch reads MRFLLLLTVALLLTCIMETDA. Positions 22–34 are excised as a propeptide; it reads EAKPEDLAERFRE.

Contains 2 disulfide bond. In terms of tissue distribution, expressed by the venom duct.

The protein localises to the secreted. The protein is Conotoxin Cl14.11 of Californiconus californicus (California cone).